The chain runs to 218 residues: Octanoyltransferase (218 aa).

The BPL/LPL catalytic domain occupies 27–210; it reads TGGEDTLYLV…QFLAIFTHPA (184 aa). Substrate contacts are provided by residues 72–79, 139–141, and 152–154; these read RGGNITCH, SIG, and GLA. Catalysis depends on C170, which acts as the Acyl-thioester intermediate.

The protein belongs to the LipB family.

Its subcellular location is the cytoplasm. It catalyses the reaction octanoyl-[ACP] + L-lysyl-[protein] = N(6)-octanoyl-L-lysyl-[protein] + holo-[ACP] + H(+). Its pathway is protein modification; protein lipoylation via endogenous pathway; protein N(6)-(lipoyl)lysine from octanoyl-[acyl-carrier-protein]: step 1/2. Its function is as follows. Catalyzes the transfer of endogenously produced octanoic acid from octanoyl-acyl-carrier-protein onto the lipoyl domains of lipoate-dependent enzymes. Lipoyl-ACP can also act as a substrate although octanoyl-ACP is likely to be the physiological substrate. The polypeptide is Octanoyltransferase (Nitratidesulfovibrio vulgaris (strain ATCC 29579 / DSM 644 / CCUG 34227 / NCIMB 8303 / VKM B-1760 / Hildenborough) (Desulfovibrio vulgaris)).